The sequence spans 211 residues: Metalloproteinase inhibitor 3 (211 aa).

The signal sequence occupies residues 1 to 23 (MTPWLGLVVLLSCWSLGHWGTEA). Residue Cys-24 participates in Zn(2+) binding. Involved in metalloproteinase-binding stretches follow at residues 24–27 (CTCS) and 88–89 (ES). Cystine bridges form between Cys-24/Cys-91, Cys-26/Cys-118, Cys-36/Cys-143, Cys-145/Cys-192, Cys-150/Cys-155, and Cys-163/Cys-184. The NTR domain maps to 24-143 (CTCSPSHPQD…GLNYRYHLGC (120 aa)). Residues 105–188 (TGRVYEGKMY…SKHYACIRQK (84 aa)) form a mediates interaction with EFEMP1 region.

This sequence belongs to the protease inhibitor I35 (TIMP) family. Interacts with EFEMP1. Interacts with KDR.

It localises to the secreted. The protein resides in the extracellular space. Its subcellular location is the extracellular matrix. Its function is as follows. Mediates a variety of processes including matrix regulation and turnover, inflammation, and angiogenesis, through reversible inhibition of zinc protease superfamily enzymes, primarily matrix metalloproteinases (MMPs). Regulates extracellular matrix (ECM) remodeling through inhibition of matrix metalloproteinases (MMP) including MMP-1, MMP-2, MMP-3, MMP-7, MMP-9, MMP-13, MMP-14 and MMP-15. Additionally, modulates the processing of amyloid precursor protein (APP) and apolipoprotein E receptor ApoER2 by inhibiting two alpha-secretases ADAM10 and ADAM17. Functions as a tumor suppressor and a potent inhibitor of angiogenesis. Exerts its anti-angiogenic effect by directly interacting with vascular endothelial growth factor (VEGF) receptor-2/KDR, preventing its binding to the VEGFA ligand. Selectively induces apoptosis in angiogenic endothelial cells through a caspase-independent cell death pathway. Mechanistically, inhibits matrix-induced focal adhesion kinase PTK2 tyrosine phosphorylation and association with paxillin/PXN and disrupts the incorporation of ITGB3, PTK2 and PXN into focal adhesion contacts on the matrix. The sequence is that of Metalloproteinase inhibitor 3 (Timp3) from Rattus norvegicus (Rat).